Consider the following 272-residue polypeptide: Type III pantothenate kinase (272 aa).

6–13 (NVNNTNTL) is a binding site for ATP. 113-116 (GADR) contacts substrate. The active-site Proton acceptor is the D115. K(+) is bound at residue D135. Residue T138 coordinates ATP. T190 provides a ligand contact to substrate.

Belongs to the type III pantothenate kinase family. Homodimer. It depends on NH4(+) as a cofactor. Requires K(+) as cofactor.

Its subcellular location is the cytoplasm. It carries out the reaction (R)-pantothenate + ATP = (R)-4'-phosphopantothenate + ADP + H(+). It functions in the pathway cofactor biosynthesis; coenzyme A biosynthesis; CoA from (R)-pantothenate: step 1/5. In terms of biological role, catalyzes the phosphorylation of pantothenate (Pan), the first step in CoA biosynthesis. The polypeptide is Type III pantothenate kinase (Acidobacterium capsulatum (strain ATCC 51196 / DSM 11244 / BCRC 80197 / JCM 7670 / NBRC 15755 / NCIMB 13165 / 161)).